Here is a 221-residue protein sequence, read N- to C-terminus: Ras-related protein Rab-27A (221 aa).

The residue at position 2 (S2) is an N-acetylserine. S2 carries the phosphoserine modification. 16–24 (GDSGVGKTS) is a binding site for GTP. The Effector region motif lies at 38-46 (FITTVGIDF). GTP-binding positions include 74 to 78 (DTAGQ), 133 to 136 (NKSD), and 163 to 165 (SAA). A disulfide bond links C123 and C188. S-geranylgeranyl cysteine attachment occurs at residues C219 and C221. C221 carries the cysteine methyl ester modification.

It belongs to the small GTPase superfamily. Rab family. In terms of assembly, binds SYTL1, SYTL2, SLAC2B, MYRIP, SYTL3, SYTL4, SYTL5 and MLPH. Interacts with UNC13D. Interacts with RPH3A and RPH3A. Does not interact with the BLOC-3 complex (heterodimer of HPS1 and HPS4). Interacts (GDP-bound form preferentially) with DENND10. Detected in melanocytes. Expressed abundantly in the stomach and is predominantly localized at the apical region of gastric-surface mucus cells. Also expressed in the thymus and lung.

Its subcellular location is the membrane. The protein resides in the melanosome. The protein localises to the late endosome. It is found in the lysosome. The enzyme catalyses GTP + H2O = GDP + phosphate + H(+). With respect to regulation, regulated by guanine nucleotide exchange factors (GEFs) which promote the exchange of bound GDP for free GTP, GTPase activating proteins (GAPs) which increase the GTP hydrolysis activity, and GDP dissociation inhibitors which inhibit the dissociation of the nucleotide from the GTPase. Activated by GEFs such as DENND10. In terms of biological role, small GTPase which cycles between active GTP-bound and inactive GDP-bound states. In its active state, binds to a variety of effector proteins to regulate homeostasis of late endocytic pathway, including endosomal positioning, maturation and secretion. Plays a role in cytotoxic granule exocytosis in lymphocytes. Required for both granule maturation and granule docking and priming at the immunologic synapse. This is Ras-related protein Rab-27A (Rab27a) from Mus musculus (Mouse).